Consider the following 334-residue polypeptide: Phenylalanine--tRNA ligase alpha subunit (334 aa).

E249 serves as a coordination point for Mg(2+).

Belongs to the class-II aminoacyl-tRNA synthetase family. Phe-tRNA synthetase alpha subunit type 1 subfamily. In terms of assembly, tetramer of two alpha and two beta subunits. Mg(2+) is required as a cofactor.

The protein localises to the cytoplasm. The enzyme catalyses tRNA(Phe) + L-phenylalanine + ATP = L-phenylalanyl-tRNA(Phe) + AMP + diphosphate + H(+). This is Phenylalanine--tRNA ligase alpha subunit from Desulfatibacillum aliphaticivorans.